Consider the following 255-residue polypeptide: Receptor expression-enhancing protein 3 (255 aa).

3 consecutive transmembrane segments (helical) span residues 1-21, 35-55, and 59-79; these read MVSWMISRAVVLVFGMLYPAY, YVRWMMYWIVFALYTVIETVA, and VAWFPLYYELKIAFVIWLLSP. Residues 158-242 are disordered; it reads TIQGDEPVGQ…KGRKEVRYGS (85 aa). Thr-201 carries the post-translational modification Phosphothreonine. Position 210 is a phosphoserine (Ser-210). Over residues 222-231 the composition is skewed to polar residues; it reads RSQSMKSVKT.

Belongs to the DP1 family. In terms of tissue distribution, expressed in circumvallate papillae.

It localises to the endoplasmic reticulum membrane. Its function is as follows. Microtubule-binding protein required to ensure proper cell division and nuclear envelope reassembly by sequestering the endoplasmic reticulum away from chromosomes during mitosis. Probably acts by clearing the endoplasmic reticulum membrane from metaphase chromosomes. The chain is Receptor expression-enhancing protein 3 (REEP3) from Homo sapiens (Human).